Consider the following 217-residue polypeptide: Chaperone protein TorD (217 aa).

Belongs to the TorD/DmsD family. TorD subfamily.

The protein localises to the cytoplasm. Involved in the biogenesis of TorA. Acts on TorA before the insertion of the molybdenum cofactor and, as a result, probably favors a conformation of the apoenzyme that is competent for acquiring the cofactor. The protein is Chaperone protein TorD of Shewanella oneidensis (strain ATCC 700550 / JCM 31522 / CIP 106686 / LMG 19005 / NCIMB 14063 / MR-1).